A 158-amino-acid polypeptide reads, in one-letter code: MHEGVQVSSKLEQLQDLLAPVVVALGYQCWGIDFSSQGKHSVLRIYIDKEGGVLVDDCAIVSRQISGVLDVEDPISTEYTLEVSSPGMERPLFTIEQFASYAGEQVKIKLRSPFEGRRNFQGLLRGVEEQDVVVQVEDHEFLLPIDMIDKANIIPTFD.

It belongs to the RimP family.

The protein localises to the cytoplasm. In terms of biological role, required for maturation of 30S ribosomal subunits. The chain is Ribosome maturation factor RimP from Pseudomonas savastanoi pv. phaseolicola (strain 1448A / Race 6) (Pseudomonas syringae pv. phaseolicola (strain 1448A / Race 6)).